Reading from the N-terminus, the 336-residue chain is Delta(1)-pyrroline-2-carboxylate reductase (336 aa).

Ser-47 acts as the Charge relay system in catalysis. His-48 functions as the Proton donor in the catalytic mechanism. Residue Arg-52 coordinates substrate. 120-124 (HFSAL) provides a ligand contact to NADP(+). Thr-160 contributes to the substrate binding site. Position 178-180 (178-180 (DFA)) interacts with NADP(+). 186–187 (RG) is a binding site for substrate. Residue Asp-188 is the Charge relay system of the active site. NADP(+)-binding positions include 229–230 (HK) and 304–310 (RLPSQRR).

Belongs to the LDH2/MDH2 oxidoreductase family. As to quaternary structure, homodimer.

The enzyme catalyses L-proline + NAD(+) = 1-pyrroline-2-carboxylate + NADH + H(+). It carries out the reaction L-proline + NADP(+) = 1-pyrroline-2-carboxylate + NADPH + H(+). In terms of biological role, catalyzes the reduction of Delta(1)-pyrroline-2-carboxylate (Pyr2C) to L-proline, using NADPH as the electron donor. May be involved in a degradation pathway that converts trans-3-hydroxy-L-proline (t3LHyp) to L-proline. In Pseudomonas fluorescens (strain ATCC BAA-477 / NRRL B-23932 / Pf-5), this protein is Delta(1)-pyrroline-2-carboxylate reductase.